The sequence spans 2201 residues: Activating signal cointegrator 1 complex subunit 3 (2201 aa).

The residue at position 12 (Ser12) is a Phosphoserine. 2 coiled-coil regions span residues 18-81 (KQDN…KQIV) and 328-356 (IQSE…KAGE). Residues 486–669 (ETAYNTNENM…FLHVNPCIGL (184 aa)) form the Helicase ATP-binding 1 domain. 499–506 (APTGAGKT) is an ATP binding site. Lys572 is subject to N6-acetyllysine. Positions 611 to 614 (DEVH) match the DEVH box motif. Positions 696-914 (QLNNMDEVCY…GTVTNVEEAV (219 aa)) constitute a Helicase C-terminal 1 domain. Residues 978–1287 (STDLGRTASH…GAEAVCIINF (310 aa)) enclose the SEC63 1 domain. One can recognise a Helicase ATP-binding 2 domain in the interval 1336-1511 (HTLYHTDCNV…WLNIRQMGLF (176 aa)). 1349-1356 (APTGSGKT) contributes to the ATP binding site. A DEIH box motif is present at residues 1453–1456 (DEIH). One can recognise a Helicase C-terminal 2 domain in the interval 1544-1739 (PTFQAIRSHS…VLSDHLNAEI (196 aa)). In terms of domain architecture, SEC63 2 spans 1812–2176 (PLTYGRIASY…LGLDQQYDIH (365 aa)).

It belongs to the helicase family. As to quaternary structure, identified in the ASCC complex that contains ASCC1, ASCC2 and ASCC3. Functions as a scaffolding subunit that interacts directly with both ASCC1 and ASCC2. Interacts directly with ALKBH3, and thereby recruits ALKBH3 to the ASCC complex. Part of the ASC-1/TRIP4 complex, that contains TRIP4, ASCC1, ASCC2 and ASCC3. Part of the RQT (ribosome quality control trigger) complex, that contains ASCC2, ASCC3 and TRIP4. Associates with ribosomes; recruited to collided ribosomes. Interacts with ZCCHC4. Interacts with ZNF598. Interacts with RPS3.

The protein resides in the nucleus. Its subcellular location is the nucleus speckle. It localises to the cytoplasm. It is found in the cytosol. It carries out the reaction Couples ATP hydrolysis with the unwinding of duplex DNA by translocating in the 3'-5' direction.. The catalysed reaction is ATP + H2O = ADP + phosphate + H(+). Functionally, ATPase involved both in DNA repair and rescue of stalled ribosomes. 3'-5' DNA helicase involved in repair of alkylated DNA: promotes DNA unwinding to generate single-stranded substrate needed for ALKBH3, enabling ALKBH3 to process alkylated N3-methylcytosine (3mC) within double-stranded regions. Also involved in activation of the ribosome quality control (RQC) pathway, a pathway that degrades nascent peptide chains during problematic translation. Drives the splitting of stalled ribosomes that are ubiquitinated in a ZNF598-dependent manner, as part of the ribosome quality control trigger (RQT) complex. Part of the ASC-1 complex that enhances NF-kappa-B, SRF and AP1 transactivation. The polypeptide is Activating signal cointegrator 1 complex subunit 3 (ascc3) (Bos taurus (Bovine)).